A 270-amino-acid polypeptide reads, in one-letter code: SAGA-associated factor 29 homolog A (270 aa).

S2 is subject to N-acetylserine. The interval 85 to 113 (LPSGPTGQQRRKLEGNEQKRKRMKVDTDV) is disordered. Basic and acidic residues predominate over residues 95 to 113 (RKLEGNEQKRKRMKVDTDV). The region spanning 125 to 270 (EAYASLKGEQ…VVALPEGHRQ (146 aa)) is the SGF29 C-terminal domain. 2 histone H3K4me3 N-terminus binding regions span residues 168-170 (DEE) and 217-220 (GTTA). Residues 242-245 (FDDD) form a histone H3K4me3 binding region.

The protein belongs to the SGF29 family. In terms of tissue distribution, expressed in roots, rosette leaves, cauline leaves, stems and flowers.

It localises to the nucleus. In terms of biological role, chromatin reader component of the transcription regulatory histone acetylation (HAT) complex SAGA. Involved in salt stress tolerance. Enhances the effect of ADA2B in the positive regulation of salt-induced gene expression. The sequence is that of SAGA-associated factor 29 homolog A from Arabidopsis thaliana (Mouse-ear cress).